The sequence spans 340 residues: MIFVDACFKKSTPYTPVWMMRQAGRYLPEYMEVRASAGDFLSLCKDYKKASEVTLQPVDILGVDAAIIFSDILVVPLEMGMDLKFEKGEGPVFSNPIKTKEDLERLDVEKSIKNLSYVYDALALTREKLAHDKALIGFCGSPWTIATYMIEGGGSKNYAKCKKLVYQNPEFLHQILSKLTLALKHYIQEQIKAGANAVQIFDSWASALEEEMFFEFSFKYMLEIADFIKEKYPHIPVILFPKGVSGFLDNINGNFDVFGVDWSTPLELAKEKLGAKYTLQGNMEPCRLYDKKAIEVGVDKILNIMQDSAHIFNLGHGILPDIPVENAKYFIKLVQEKSKK.

Residues 21-25 (RQAGR), Asp71, Tyr148, Ser203, and His316 each bind substrate.

Belongs to the uroporphyrinogen decarboxylase family. As to quaternary structure, homodimer.

Its subcellular location is the cytoplasm. The enzyme catalyses uroporphyrinogen III + 4 H(+) = coproporphyrinogen III + 4 CO2. It participates in porphyrin-containing compound metabolism; protoporphyrin-IX biosynthesis; coproporphyrinogen-III from 5-aminolevulinate: step 4/4. Functionally, catalyzes the decarboxylation of four acetate groups of uroporphyrinogen-III to yield coproporphyrinogen-III. The polypeptide is Uroporphyrinogen decarboxylase (Campylobacter lari (strain RM2100 / D67 / ATCC BAA-1060)).